Reading from the N-terminus, the 591-residue chain is V-type ATP synthase alpha chain (591 aa).

Position 233–240 (233–240 (GPFGAGKT)) interacts with ATP.

The protein belongs to the ATPase alpha/beta chains family.

It catalyses the reaction ATP + H2O + 4 H(+)(in) = ADP + phosphate + 5 H(+)(out). Produces ATP from ADP in the presence of a proton gradient across the membrane. The V-type alpha chain is a catalytic subunit. The chain is V-type ATP synthase alpha chain from Streptococcus pyogenes serotype M28 (strain MGAS6180).